Here is a 793-residue protein sequence, read N- to C-terminus: Short transient receptor potential channel 1 (793 aa).

The disordered stretch occupies residues 1-30; the sequence is MMAALYPSTDLSGASSSSLPSSPSSSSPNE. Topologically, residues 1 to 345 are cytoplasmic; the sequence is MMAALYPSTD…FGQMSGYRRK (345 aa). The segment covering 15 to 28 has biased composition (low complexity); the sequence is SSSSLPSSPSSSSP. 4 ANK repeats span residues 46-75, 83-109, 111-156, and 158-180; these read LNEKLFLLACDKGDYYMVKEILEENSSGDL, LGRNAVTITIENENLDILQLLLDYGCQ, ADAL…EYST, and MDVAPVILAAHRNNYEILTMLLK. Positions 189, 193, 195, and 198 each coordinate Zn(2+). Positions 346-379 form an intramembrane region, discontinuously helical; it reads PTCKKIMTVLTVGIFWPVLSLCYLIAPKSQFGRI. The Cytoplasmic portion of the chain corresponds to 380 to 386; that stretch reads IHTPFMK. A helical transmembrane segment spans residues 387 to 404; that stretch reads FIIHGASYFTFLLLLNLY. Residues 405 to 422 lie on the Extracellular side of the membrane; sequence SLVYHEDKKNTMGPALER. The helical transmembrane segment at 423–439 threads the bilayer; the sequence is IDYLLILWIIGMIWSDI. The Cytoplasmic portion of the chain corresponds to 440 to 455; the sequence is KRLWYEGLEDFLEESR. The chain crosses the membrane as a helical span at residues 456–475; that stretch reads NQLSFVMNSLYLATFALKEE. Over 476–496 the chain is Extracellular; the sequence is AHNKFHDFADRKDWDAFHPTL. A helical transmembrane segment spans residues 497–517; sequence VAEGLFAFANVLSYLRLFFYV. Residues 518–536 lie on the Cytoplasmic side of the membrane; the sequence is YTSSILGPLQISMGRMLQD. Residues 537–558 traverse the membrane as a helical segment; that stretch reads FGKFLGMFLLVLFSFTIGLTQL. Residues 559-623 are Extracellular-facing; it reads YDKGYTPKEQ…GEELQSFVGA (65 aa). Cysteine 571 and cysteine 576 are joined by a disulfide. A helical transmembrane segment spans residues 624 to 644; the sequence is FIVGTYNVVVVIVLTKLLVAM. The Cytoplasmic portion of the chain corresponds to 645–793; the sequence is LHKSFQLIAN…SKYAMFYPRN (149 aa).

It belongs to the transient receptor (TC 1.A.4) family. STrpC subfamily. TRPC1 sub-subfamily. As to quaternary structure, heterotetramer with TRPC4 and/or TRPC5. Forms a heteromeric ion channel with TRPC4, with a 1:3 TRPC1:TRPC4 stoichiometry. Unlike other TRP channel proteins, does not form a homomeric channel. Interacts with TRPC4AP. Interacts with ITPR3. Interacts with MX1 and RNF24. Interacts with FKBP4. Interacts with PLSCR1. Interacts with PKD2L2. Forms a heterotetramer with PKD2 with a 2:2 stoichiometry; has distinct channel properties separate from PKD2 or TRPC1 homomers alone. In terms of processing, activation of PRKCA induces phosphorylation of TRPC1 and subsequent Ca2+ entry into cells.

The protein resides in the cell membrane. The catalysed reaction is Ca(2+)(in) = Ca(2+)(out). It catalyses the reaction Na(+)(in) = Na(+)(out). The enzyme catalyses Li(+)(in) = Li(+)(out). It carries out the reaction Cs(+)(in) = Cs(+)(out). Its activity is regulated as follows. May be operated by a phosphatidylinositol second messenger system activated by receptor tyrosine kinases or G-protein coupled receptors. Also activated by intracellular calcium store depletion. Functionally, forms a receptor-activated non-selective calcium permeant cation channel. Forms a heteromeric ion channel with TRPC4 or TRPC5 that has reduced calcium permeability compared to the homomeric TRPC4 or TRPC5 channel. Also permeable to monovalent ions including sodium, lithium and cesium ions. The chain is Short transient receptor potential channel 1 (TRPC1) from Bos taurus (Bovine).